The following is a 357-amino-acid chain: Isoflavone 7-O-methyltransferase (357 aa).

S-adenosyl-L-methionine-binding positions include 200–203, Asp224, 224–225, 244–245, and Lys258; these read VGGG, DR, and DM. His262 functions as the Proton acceptor in the catalytic mechanism.

This sequence belongs to the class I-like SAM-binding methyltransferase superfamily. Cation-independent O-methyltransferase family. COMT subfamily.

It catalyses the reaction a 7-hydroxyisoflavone + S-adenosyl-L-methionine = a 7-methoxyisoflavone + S-adenosyl-L-homocysteine + H(+). Functionally, 7-O-methyltransferase involved in the biosynthesis of isoformononetin. Can use daidzein as substrate, but not medicarpin or 2,7,4'-trihydroxyisoflavanone. This Glycyrrhiza echinata (Licorice) protein is Isoflavone 7-O-methyltransferase (D7OMT).